Reading from the N-terminus, the 332-residue chain is 2,3-diketo-L-gulonate reductase (332 aa).

His-44 acts as the Proton donor in catalysis. NAD(+)-binding positions include 168–174 (ITMVDMS), 224–225 (WK), and 304–306 (GHE).

The protein belongs to the LDH2/MDH2 oxidoreductase family. DlgD subfamily. As to quaternary structure, homodimer.

Its subcellular location is the cytoplasm. The enzyme catalyses 3-dehydro-L-gulonate + NAD(+) = 2,3-dioxo-L-gulonate + NADH + H(+). The catalysed reaction is 3-dehydro-L-gulonate + NADP(+) = 2,3-dioxo-L-gulonate + NADPH + H(+). Catalyzes the reduction of 2,3-diketo-L-gulonate in the presence of NADH, to form 3-keto-L-gulonate. The sequence is that of 2,3-diketo-L-gulonate reductase from Salmonella heidelberg (strain SL476).